The primary structure comprises 133 residues: ATP synthase epsilon chain, chloroplastic (133 aa).

Belongs to the ATPase epsilon chain family. In terms of assembly, F-type ATPases have 2 components, CF(1) - the catalytic core - and CF(0) - the membrane proton channel. CF(1) has five subunits: alpha(3), beta(3), gamma(1), delta(1), epsilon(1). CF(0) has three main subunits: a, b and c.

Its subcellular location is the plastid. It is found in the chloroplast thylakoid membrane. In terms of biological role, produces ATP from ADP in the presence of a proton gradient across the membrane. The sequence is that of ATP synthase epsilon chain, chloroplastic from Phaeodactylum tricornutum (strain CCAP 1055/1).